The chain runs to 341 residues: HMG box-containing protein C10F6.08c (341 aa).

Residues 68-77 (SEAKSREFGQ) are compositionally biased toward basic and acidic residues. Disordered stretches follow at residues 68–195 (SEAK…SNAK) and 236–341 (LTEE…SSNA). Polar residues-rich tracts occupy residues 116–157 (DTNV…QVVQ) and 165–177 (NTDPIPSPIITNL). Low complexity predominate over residues 178–195 (KTESSKSSGAKKATSNAK). A DNA-binding region (HMG box) is located at residues 195 to 263 (KITDTMLFNH…KAREARRRRS (69 aa)). 2 stretches are compositionally biased toward basic and acidic residues: residues 238-256 (EEEKKPYHEGLLAAREKAR) and 269-304 (KLEKEKAKEKQKDKDQEQDTVSDKNQIDEIEKGQKE). Residues T314 and T315 each carry the phosphothreonine modification. Phosphoserine is present on S316.

The protein resides in the nucleus. The sequence is that of HMG box-containing protein C10F6.08c from Schizosaccharomyces pombe (strain 972 / ATCC 24843) (Fission yeast).